The chain runs to 486 residues: B-type cell cycle switch protein ccs52B (486 aa).

Positions 24-36 (RLETLSTPPSSAS) match the PEST motif motif. Polar residues predominate over residues 27-36 (TLSTPPSSAS). The interval 27–57 (TLSTPPSSASPRAISNLSSTPSPSKSSKCSD) is disordered. Residues 41–53 (SNLSSTPSPSKSS) are compositionally biased toward low complexity. The C-box signature appears at 57–63 (DRFIPCR). Residues 87-98 (AYNRLLKSELFG) carry the CSM motif motif. 7 WD repeats span residues 177-214 (QDDF…VTKL), 218-257 (GPYD…KVRT), 260-297 (GHQT…DFIG), 301-340 (GHKS…PTLR), 343-385 (EHTA…QLNS), 387-428 (DTGS…KVAT), and 431-470 (GHSM…KTPA).

The protein belongs to the WD repeat CDC20/Fizzy family. As to expression, mostly expressed in shoot apices and, to a lower extent, in roots, especially in root tips, and in hypocotyls. Expressed in nodulation-competent root zone but not in the nodules.

It functions in the pathway protein modification; protein ubiquitination. In terms of biological role, component of the anaphase promoting complex/cyclosome (APC/C), a cell cycle-regulated E3 ubiquitin-protein ligase complex that controls progression through mitosis and the G1 phase of the cell cycle. The polypeptide is B-type cell cycle switch protein ccs52B (Medicago truncatula (Barrel medic)).